Consider the following 367-residue polypeptide: Molybdenum import ATP-binding protein ModC (367 aa).

The ABC transporter domain occupies 1–234 (MSSAALEVRL…PALSGGFGHE (234 aa)). Position 33–40 (33–40 (GPSGAGKS)) interacts with ATP. One can recognise a Mop domain in the interval 293 to 366 (HISLHNILPV…IKSVAVDVLG (74 aa)).

Belongs to the ABC transporter superfamily. Molybdate importer (TC 3.A.1.8) family. As to quaternary structure, the complex is composed of two ATP-binding proteins (ModC), two transmembrane proteins (ModB) and a solute-binding protein (ModA).

It localises to the cell inner membrane. The catalysed reaction is molybdate(out) + ATP + H2O = molybdate(in) + ADP + phosphate + H(+). Its function is as follows. Part of the ABC transporter complex ModABC involved in molybdenum import. Responsible for energy coupling to the transport system. The chain is Molybdenum import ATP-binding protein ModC from Granulibacter bethesdensis (strain ATCC BAA-1260 / CGDNIH1).